A 195-amino-acid chain; its full sequence is FMN-dependent NADH:quinone oxidoreductase (195 aa).

Residues S10, 16-18, 91-94, and 135-138 each bind FMN; these read SQS, MYNF, and TRGG.

It belongs to the azoreductase type 1 family. As to quaternary structure, homodimer. FMN serves as cofactor.

It catalyses the reaction 2 a quinone + NADH + H(+) = 2 a 1,4-benzosemiquinone + NAD(+). The catalysed reaction is N,N-dimethyl-1,4-phenylenediamine + anthranilate + 2 NAD(+) = 2-(4-dimethylaminophenyl)diazenylbenzoate + 2 NADH + 2 H(+). Functionally, quinone reductase that provides resistance to thiol-specific stress caused by electrophilic quinones. Its function is as follows. Also exhibits azoreductase activity. Catalyzes the reductive cleavage of the azo bond in aromatic azo compounds to the corresponding amines. The polypeptide is FMN-dependent NADH:quinone oxidoreductase (Vibrio vulnificus (strain YJ016)).